The primary structure comprises 96 residues: UPF0235 protein Acid345_4205 (96 aa).

This sequence belongs to the UPF0235 family.

The chain is UPF0235 protein Acid345_4205 from Koribacter versatilis (strain Ellin345).